The sequence spans 674 residues: Xaa-Pro aminopeptidase 2 (674 aa).

A signal peptide spans 1 to 22 (MAQAYWQCYPWLVLLCACAWSY). Asparagine 65 carries an N-linked (GlcNAc...) asparagine glycan. Arginine 116 lines the substrate pocket. Asparagine 278 and asparagine 293 each carry an N-linked (GlcNAc...) asparagine glycan. Residue histidine 430 participates in substrate binding. Residues aspartate 450, aspartate 461, and histidine 524 each contribute to the Zn(2+) site. Substrate is bound by residues histidine 524, histidine 533, and glutamate 555. 2 residues coordinate Zn(2+): glutamate 555 and glutamate 569. Residue alanine 650 is the site of GPI-anchor amidated alanine attachment. A propeptide spans 651–674 (SAPHTTSLASMWVASALAILSWSC) (removed in mature form).

This sequence belongs to the peptidase M24B family. Homotrimer. The cofactor is Zn(2+). N-glycosylated. Expressed strongly in lung, liver and heart, and at lower levels in kidney, testis, brain, spleen and skeletal muscle.

It is found in the cell membrane. It catalyses the reaction Release of any N-terminal amino acid, including proline, that is linked to proline, even from a dipeptide or tripeptide.. Inhibited by the chelating agents 1,10-phenanthroline and EDTA. Inhibited by the thiol-containing compounds 2-mercaptoethanol and dithiothreitol. Also inhibited by apstatin, captopril and p-(ch1oromercuri)benzenesulfonic acid. Weakly inhibited by D,L-2-mercaptomethyl-3-guanidinoethylthiopropanoic acid and N-[l-(R,S)-carboxy-(2-phenylethyl)]-Ala-Ala-Phe-p-aminobenzoate. Inhibited by ramiprilat and enalaprilat, in a Mn(2+)-dependent manner. Metal ions have a complex substrate- and concentration-dependent effect on activity. Activity towards Arg-Pro-Pro and Gly-Pro-Hyp is stimulated by Mn(2+) ion concentrations of 10-100 uM and then inhibited at Mn(2+) concentrations of 1-2 mM. Mn(2+) concentrations in excess of 2 mM stimulate activity towards Gly-Pro-Hyp but inhibit activity towards Arg-Pro-Pro. Zn(2+) and Co(2+) ions also inhibit activity towards Arg-Pro-Pro at high concentrations. Activity towards bradykinin is inhibited by Mn(2+) concentrations in excess of 1 mM. Functionally, membrane-bound metalloprotease which catalyzes the removal of a penultimate prolyl residue from the N-termini of peptides, such as Arg-Pro-Pro. May play a role in the metabolism of the vasodilator bradykinin. In Rattus norvegicus (Rat), this protein is Xaa-Pro aminopeptidase 2.